We begin with the raw amino-acid sequence, 338 residues long: Mitoferrin-1 (338 aa).

The interval Met1–Glu37 is disordered. Solcar repeat units follow at residues Ala43–Thr131, Asn141–Gln225, and Tyr232–Ile326. 6 consecutive transmembrane segments (helical) span residues Val45–Tyr64, Gly106–Tyr125, His143–Asn162, Ser200–Tyr219, Pro234–Thr253, and Gly301–Tyr320.

The protein belongs to the mitochondrial carrier (TC 2.A.29) family. Interacts with ACB10; this interaction stabilizes SLC25A37 and enhances the function of SLC25A37 to import mitochondrial iron during erythroid differentiation. Highly expressed in hematopoietic organs, fetal liver, bone marrow and spleen.

Its subcellular location is the mitochondrion inner membrane. It catalyses the reaction Fe(2+)(in) = Fe(2+)(out). Mitochondrial iron transporter that specifically mediates iron uptake in developing erythroid cells, thereby playing an essential role in heme biosynthesis. This is Mitoferrin-1 (Slc25a37) from Mus musculus (Mouse).